Here is a 375-residue protein sequence, read N- to C-terminus: Pectate lyase 1 (375 aa).

Positions 1 to 21 (MASCTLLAVLVFLCAIVSCFS) are cleaved as a signal peptide. A disulfide bridge connects residues Cys-28 and Cys-45. A glycan (N-linked (GlcNAc...) asparagine) is linked at Asn-110. Cys-128 and Cys-147 are oxidised to a cystine. An N-linked (GlcNAc...) asparagine glycan is attached at Asn-148. Ca(2+) is bound at residue Asp-170. Asn-178 is a glycosylation site (N-linked (GlcNAc...) asparagine). Ca(2+) is bound by residues Asp-194 and Asp-198. Residue Arg-250 is part of the active site. N-linked (GlcNAc...) asparagine glycosylation is present at Asn-293. Cys-306 and Cys-312 are oxidised to a cystine. Asn-352 carries N-linked (GlcNAc...) asparagine glycosylation.

This sequence belongs to the polysaccharide lyase 1 family. Amb a subfamily. It depends on Ca(2+) as a cofactor.

The enzyme catalyses Eliminative cleavage of (1-&gt;4)-alpha-D-galacturonan to give oligosaccharides with 4-deoxy-alpha-D-galact-4-enuronosyl groups at their non-reducing ends.. It functions in the pathway glycan metabolism; pectin degradation; 2-dehydro-3-deoxy-D-gluconate from pectin: step 2/5. Its function is as follows. Has pectate lyase activity. The sequence is that of Pectate lyase 1 from Chamaecyparis obtusa (Hinoki false-cypress).